The sequence spans 764 residues: Oxysterol-binding protein-related protein 10 (764 aa).

The segment at 1 to 74 (MERAVQGTDG…PSGGGGRRRE (74 aa)) is disordered. 2 stretches are compositionally biased toward low complexity: residues 15 to 47 (NSSS…SAAA) and 55 to 65 (RSSPGSVAASP). A phosphoserine mark is found at Ser29 and Ser30. An Omega-N-methylarginine modification is found at Arg38. Ser57, Ser60, and Ser64 each carry phosphoserine. In terms of domain architecture, PH spans 74–171 (EPALEGVLSK…WVTQLRACAK (98 aa)). A Phosphothreonine modification is found at Thr196. Residues Ser201, Ser209, and Ser223 each carry the phosphoserine modification. Disordered stretches follow at residues 304-335 (GQPS…NGTL) and 354-391 (AEDE…TELG). Over residues 359–370 (TSQPEPEPNSGS) the composition is skewed to polar residues. The span at 374–389 (LSEDEKSDNEDKEETE) shows a compositional bias: acidic residues. A 1,2-diacyl-sn-glycero-3-phospho-(1D-myo-inositol 4-phosphate) is bound by residues 413–418 (LTKVVL) and 477–480 (KPYN). Residues 413–418 (LTKVVL) and Asn480 contribute to the a 1,2-diacyl-sn-glycero-3-phospho-L-serine site. The tract at residues 501 to 520 (KRTASRSPASCHEHPMADDP) is disordered. Residues 511 to 520 (CHEHPMADDP) are compositionally biased toward basic and acidic residues. Residue 535–536 (HH) participates in a 1,2-diacyl-sn-glycero-3-phospho-(1D-myo-inositol 4-phosphate) binding. An a 1,2-diacyl-sn-glycero-3-phospho-L-serine-binding site is contributed by Ser561. Residues 713–740 (DIDAATEQKRHLEEKQRVEERKRENLRT) adopt a coiled-coil conformation. Residues Lys721, Glu725, and Arg729 each contribute to the a 1,2-diacyl-sn-glycero-3-phospho-(1D-myo-inositol 4-phosphate) site.

It belongs to the OSBP family. In terms of assembly, interacts with OSBPL9. Interacts with DIAPH1.

The protein localises to the cytoplasm. It localises to the cytoskeleton. In terms of biological role, probable lipid transporter involved in lipid countertransport between the endoplasmic reticulum and the plasma membrane. Its ability to bind phosphatidylserine, suggests that it specifically exchanges phosphatidylserine with phosphatidylinositol 4-phosphate (PI4P), delivering phosphatidylserine to the plasma membrane in exchange for PI4P. Plays a role in negative regulation of lipid biosynthesis. Negatively regulates APOB secretion from hepatocytes. Binds cholesterol and acidic phospholipids. Also binds 25-hydroxycholesterol. Binds phosphatidylserine. The protein is Oxysterol-binding protein-related protein 10 (OSBPL10) of Homo sapiens (Human).